The sequence spans 367 residues: UDP-N-acetylglucosamine--N-acetylmuramyl-(pentapeptide) pyrophosphoryl-undecaprenol N-acetylglucosamine transferase (367 aa).

UDP-N-acetyl-alpha-D-glucosamine contacts are provided by residues 15 to 17 (TGG), asparagine 127, arginine 163, serine 191, isoleucine 249, and glutamine 294.

It belongs to the glycosyltransferase 28 family. MurG subfamily.

It is found in the cell inner membrane. It catalyses the reaction di-trans,octa-cis-undecaprenyl diphospho-N-acetyl-alpha-D-muramoyl-L-alanyl-D-glutamyl-meso-2,6-diaminopimeloyl-D-alanyl-D-alanine + UDP-N-acetyl-alpha-D-glucosamine = di-trans,octa-cis-undecaprenyl diphospho-[N-acetyl-alpha-D-glucosaminyl-(1-&gt;4)]-N-acetyl-alpha-D-muramoyl-L-alanyl-D-glutamyl-meso-2,6-diaminopimeloyl-D-alanyl-D-alanine + UDP + H(+). It participates in cell wall biogenesis; peptidoglycan biosynthesis. Functionally, cell wall formation. Catalyzes the transfer of a GlcNAc subunit on undecaprenyl-pyrophosphoryl-MurNAc-pentapeptide (lipid intermediate I) to form undecaprenyl-pyrophosphoryl-MurNAc-(pentapeptide)GlcNAc (lipid intermediate II). This Burkholderia pseudomallei (strain 1106a) protein is UDP-N-acetylglucosamine--N-acetylmuramyl-(pentapeptide) pyrophosphoryl-undecaprenol N-acetylglucosamine transferase.